A 312-amino-acid chain; its full sequence is tRNA pseudouridine synthase B (312 aa).

Asp-38 serves as the catalytic Nucleophile.

It belongs to the pseudouridine synthase TruB family. Type 1 subfamily.

The enzyme catalyses uridine(55) in tRNA = pseudouridine(55) in tRNA. Its function is as follows. Responsible for synthesis of pseudouridine from uracil-55 in the psi GC loop of transfer RNAs. This chain is tRNA pseudouridine synthase B, found in Syntrophus aciditrophicus (strain SB).